The following is a 391-amino-acid chain: MTNNTKTITLNLGPQHPATHGVLRLILEMDGEIVNNADPHIGLLHRGTEKLIEHKTYLQAIPYFDRLDYVSPMCQEHAFALAVESLLECEVPRRAQFIRVLFSELTRILNHTLNIGSQALDIGATTPLLWLFEEREKIMEFYERVSGSRMHSNYFRPGGVAEDLPDGLLEDIDKFIDQFPPKLHDIESLLNENRLWKQRLVDIGVVSQKEAMDWGFSGPMLRGSGIAWDLRKSNPYDVYDEMEFEVPIGKNGDCYDRYFVRMLEMYESIKIIKQCIEKMPKGAVKTNDPKLTPPTRAKMKESMEAMIHHFKLYTAGYDVPAGETYKAVEAPKGEFGVYLYSQGVNIPYRCRIKSPGFAHLQGLDFMSKGHLMADVITIIATLDIVFGEIDR.

Belongs to the complex I 49 kDa subunit family. NDH-1 is composed of 14 different subunits. Subunits NuoB, C, D, E, F, and G constitute the peripheral sector of the complex.

The protein resides in the cell inner membrane. It catalyses the reaction a quinone + NADH + 5 H(+)(in) = a quinol + NAD(+) + 4 H(+)(out). Its function is as follows. NDH-1 shuttles electrons from NADH, via FMN and iron-sulfur (Fe-S) centers, to quinones in the respiratory chain. The immediate electron acceptor for the enzyme in this species is believed to be ubiquinone. Couples the redox reaction to proton translocation (for every two electrons transferred, four hydrogen ions are translocated across the cytoplasmic membrane), and thus conserves the redox energy in a proton gradient. The protein is NADH-quinone oxidoreductase subunit D of Rickettsia akari (strain Hartford).